A 163-amino-acid chain; its full sequence is Sperm surface protein Sp17 (163 aa).

Disordered regions lie at residues 57 to 115 and 129 to 163; these read PAEW…EKEE and VARE…THEK. Basic and acidic residues-rich tracts occupy residues 62 to 98 and 129 to 139; these read SKVE…KEEE and VAREEVKKMKT. Residues 114 to 143 enclose the IQ domain; the sequence is EEVAAVKIQAAFRGHVAREEVKKMKTDSLQ. Positions 153-163 are enriched in polar residues; that stretch reads DTGFTSRTHEK.

As to quaternary structure, homodimer. May interact with ROPN1. In terms of tissue distribution, testis- and sperm-specific.

Its subcellular location is the membrane. In terms of biological role, sperm surface zona pellucida binding protein. Helps to bind spermatozoa to the zona pellucida with high affinity. Might function in binding zona pellucida and carbohydrates. The chain is Sperm surface protein Sp17 (SPA17) from Papio hamadryas (Hamadryas baboon).